The chain runs to 690 residues: Signal peptide peptidase-like 2C (690 aa).

The N-terminal stretch at 1-28 is a signal peptide; that stretch reads MACLGSLHPLGSLLLLFLLLLLSPEARG. The Lumenal segment spans residues 29–192; sequence EYGLVRVVSK…APLEPVTDYN (164 aa). The 80-residue stretch at 87–166 folds into the PA domain; sequence DSSPRQRPLH…AVLRYTDMLD (80 aa). Asn-106 is a glycosylation site (N-linked (GlcNAc...) asparagine). Residues 193–213 traverse the membrane as a helical segment; that stretch reads MAIIFILAVGTVAAGGYWAGL. Residues 214–260 are Cytoplasmic-facing; the sequence is MEANKLQRRQAQRGGGLGGHNQQQTVAAERSQRAWEDDDFEDAPMDF. A helical membrane pass occupies residues 261 to 283; the sequence is TPAMTGAVVTMSCSIMILLYFFY. Position 284 (Asp-284) is a topological domain, lumenal. The helical transmembrane segment at 285-307 threads the bilayer; that stretch reads CFVYVMIGIFSLGASTGLYSCLA. Residues 308–328 are Cytoplasmic-facing; the sequence is PILCHLPLWRYQWVLPGQRVS. Residues 329-349 form a helical membrane-spanning segment; it reads VTWPLLLLAGLCAMVTVLWVI. The Lumenal portion of the chain corresponds to 350-354; it reads HRNED. The helical transmembrane segment at 355–373 threads the bilayer; it reads HWAWLLQDTLGVAYCLFVL. Topologically, residues 374–384 are cytoplasmic; that stretch reads RRVRLPTFKNC. Residues 385-405 form a helical membrane-spanning segment; sequence TLFLLALLAFDVFFVFITPLF. The active site involves Asp-395. At 406 to 448 the chain is on the lumenal side; the sequence is TKTGESIMVEVASGPADSSSHERLPMVLKVPRLSFSALTLCNQ. The chain crosses the membrane as a helical span at residues 449–469; it reads PFSILGFGDIVVPGFLVAYCH. Residue Asp-457 is part of the active site. At 470-482 the chain is on the cytoplasmic side; it reads RFDMQVQSRQVYY. The helical transmembrane segment at 483–503 threads the bilayer; that stretch reads MACTVAYAVGLLVTFVAMILM. A topological domain (lumenal) is located at residue Gln-504. A helical transmembrane segment spans residues 505–525; the sequence is MGQPALLYLVSSTLLTSLAVA. The PAL motif lies at 508 to 510; the sequence is PAL. Residues 526–690 lie on the Cytoplasmic side of the membrane; it reads TCRQEFTLFW…KKSMSAQAPL (165 aa). A compositionally biased stretch (basic and acidic residues) spans 564-573; it reads EDAKDSRTTN. The disordered stretch occupies residues 564–633; the sequence is EDAKDSRTTN…DPNELPSGSP (70 aa). Residues 615–624 show a composition bias toward polar residues; sequence SEGWSDTNLD.

The protein belongs to the peptidase A22B family. As to quaternary structure, interacts (via active sites) with FREY; the interaction stabilizes FREY1 protein and inhibits SPPL2C proteolytic activity. In terms of processing, glycosylated. As to expression, highly expressed in testis where it is primarily localised in spermatids (at protein level).

It is found in the endoplasmic reticulum membrane. Functionally, sperm-specific intramembrane-cleaving aspartic protease (I-CLiP) that cleaves distinct tail-anchored proteins and SNARE proteins. In elongated spermatids, modulates intracellular Ca(2+) homeostasis by controlling PLN abundance through proteolytic cleavage. During spermatogenesis, processes SNARE proteins and impacts vesicular trafficking which supports compartmental reorganization in maturating spermatids and may play a role in formation of the acrosome. In round spermatids, acts as a scaffold protein supporting FREY1 in IZUMO1 recruitment at the endoplasmic reticulum membrane and coordination of IZUMO1 complex assembly. Stabilizes FREY1 at the endoplasmic reticulum membrane through interaction. May recruit IZUMO1 interaction partners. In terms of biological role, no difference in cleavage specificity compared to isoform 1. The protein is Signal peptide peptidase-like 2C of Mus musculus (Mouse).